The sequence spans 514 residues: 6-phosphofructo-2-kinase/fructose-2,6-bisphosphatase 3 (514 aa).

A 6-phosphofructo-2-kinase region spans residues 1 to 245; it reads MPLELTQSRV…VYYLMNIHVQ (245 aa). Position 42–50 (42–50) interacts with ATP; the sequence is GLPARGKTY. Beta-D-fructose 6-phosphate contacts are provided by Arg75 and Arg99. Asp125 is a catalytic residue. The beta-D-fructose 6-phosphate site is built by Thr127 and Arg133. The active site involves Cys155. 164–169 contributes to the ATP binding site; the sequence is NIMEVK. Residues Lys169, Arg190, and Tyr194 each coordinate beta-D-fructose 6-phosphate. The tract at residues 246–514 is fructose-2,6-bisphosphatase; it reads PRTIYLCRHG…QPLLGQACLT (269 aa). Beta-D-fructose 2,6-bisphosphate is bound at residue Arg253. Catalysis depends on His254, which acts as the Tele-phosphohistidine intermediate. Beta-D-fructose 2,6-bisphosphate-binding residues include Asn260 and Gly266. Glu323 (proton donor/acceptor) is an active-site residue. Residues Tyr334, Arg348, Lys352, Tyr363, Gln389, and Arg393 each coordinate beta-D-fructose 2,6-bisphosphate. ATP is bound at residue 345–348; the sequence is YALR. Residues 389–393 and Tyr425 each bind ATP; that span reads QAVLR. The interval 444 to 475 is disordered; sequence ERSEDAKKGPNPLMRRNSVTPLASPEPTKKPR. Ser461 is subject to Phosphoserine; by AMPK and PKA. Thr463 carries the post-translational modification Phosphothreonine. Ser467 is subject to Phosphoserine. Thr471 carries the post-translational modification Phosphothreonine; by PKC.

It in the C-terminal section; belongs to the phosphoglycerate mutase family. As to quaternary structure, homodimer. Forms a heterodimer with PFKFB2. Post-translationally, phosphorylation by AMPK stimulates activity.

It carries out the reaction beta-D-fructose 2,6-bisphosphate + H2O = beta-D-fructose 6-phosphate + phosphate. The catalysed reaction is beta-D-fructose 6-phosphate + ATP = beta-D-fructose 2,6-bisphosphate + ADP + H(+). In terms of biological role, catalyzes both the synthesis and degradation of fructose 2,6-bisphosphate. This is 6-phosphofructo-2-kinase/fructose-2,6-bisphosphatase 3 (PFKFB3) from Pongo abelii (Sumatran orangutan).